The sequence spans 96 residues: Conantokin Rl-B (96 aa).

Positions 1–21 (MQLYTYLYLLVPLVTFHLILG) are cleaved as a signal peptide. The propeptide occupies 22-78 (TGTLDHGDALTERRSTDATALKPEPVLLQKSSARSTNDNGKDTQMKRILKKRGNKAR). The disordered stretch occupies residues 51–96 (KSSARSTNDNGKDTQMKRILKKRGNKARGEEELAEKAPEFARELAN). Residues 77–96 (ARGEEELAEKAPEFARELAN) are compositionally biased toward basic and acidic residues. Glu81 contacts a divalent metal cation. Glu81, Glu82, and Glu85 each carry 4-carboxyglutamate. Glu85 contributes to the a divalent metal cation binding site. 4-hydroxyproline is present on Pro88. Residues Glu89 and Glu93 each contribute to the a divalent metal cation site. Residues Glu89 and Glu93 each carry the 4-carboxyglutamate modification. Position 96 is an asparagine amide (Asn96).

This sequence belongs to the conotoxin B superfamily. Ca(2+) is required as a cofactor. Requires Mg(2+) as cofactor. In terms of processing, hydroxylation of Pro-88 is important for NR2B/GRIN2B NMDA receptor selectivity. Removal of hydroxylation does not change global NMDA receptor antagonism (tested on WT neurons), but it decreases the inhibitory potency on NR2B/GRIN2B NMDA receptors and increases the inhibitory potency on NR2A/GRIN2A NMDA receptors. Hydroxylation of Pro-88 locally disrupts a small region of the divalent cation-induced alpha-helix but does not destabilize the entire helix. As to expression, expressed by the venom duct.

The protein localises to the secreted. Its function is as follows. Conantokins inhibit N-methyl-D-aspartate (NMDA) receptors. This toxin has antagonist activity on the NR2B/GRIN2B subunit (IC(50)=0.1 uM). In vivo, when delivered into the brain, is active has anticonvulsant activity in the model of epilepsy in mice. The polypeptide is Conantokin Rl-B (Conus rolani (Cone snail)).